We begin with the raw amino-acid sequence, 569 residues long: Proton-coupled zinc antiporter SLC30A9, mitochondrial (569 aa).

Residues 1–68 constitute a mitochondrion transit peptide; the sequence is MLPGLAAAAA…IGTLSQVKLY (68 aa). 5 helical membrane passes run 240–260, 315–335, 343–363, 393–413, and 425–445; these read VVMVAICINGLNCFFKFLAWI, GVGIFMMGAGLSWYHGVMGLL, LLWAYCILAGSLVSEGATLLV, VILLEDTAAVLGVIIAATCMG, and SLGSLGVGTLLGMVSAFLIYT. Positions 463–467 match the LXXLL motif motif; that stretch reads LTELL.

The protein belongs to the cation diffusion facilitator (CDF) transporter (TC 2.A.4) family. SLC30A subfamily. In terms of assembly, interacts with GRIP1, ESR1, AR and CTNNB1.

It is found in the mitochondrion membrane. It localises to the nucleus. The protein resides in the endoplasmic reticulum. It carries out the reaction Zn(2+)(in) + 2 H(+)(out) = Zn(2+)(out) + 2 H(+)(in). Functionally, mitochondrial proton-coupled zinc ion antiporter mediating the export of zinc from the mitochondria and involved in zinc homeostasis, zinc mobilization as well as mitochondrial morphology and health. In nucleus, functions as a secondary coactivator for nuclear receptors by cooperating with p160 coactivators subtypes. Plays a role in transcriptional activation of Wnt-responsive genes. In Pongo abelii (Sumatran orangutan), this protein is Proton-coupled zinc antiporter SLC30A9, mitochondrial (SLC30A9).